The sequence spans 177 residues: Thymidine kinase (177 aa).

Gly-11–Ser-18 contributes to the ATP binding site. Catalysis depends on Glu-83, which acts as the Proton acceptor. Phe-113 is a substrate binding site. Positions 138 and 141 each coordinate Zn(2+). Residue Ile-157–Gly-161 participates in substrate binding. Residues Cys-170 and Cys-173 each coordinate Zn(2+).

The protein belongs to the thymidine kinase family. Homotetramer. Two molecules of substrate bind to each enzyme tetramer.

The enzyme catalyses thymidine + ATP = dTMP + ADP + H(+). Phosphorylates thymidine and thymidine analogs, such as azidothymidine (AZT). Part of the salvage pathway for pyrimidine deoxyribonucleotide synthesis. This chain is Thymidine kinase (OPG101), found in Vaccinia virus (strain Tian Tan) (VACV).